The following is a 163-amino-acid chain: General stress protein 16O (163 aa).

The segment covering 19–30 (QKELSGEKKETE) has biased composition (basic and acidic residues). Disordered regions lie at residues 19–55 (QKEL…TLVT) and 115–163 (ADVE…QDSK). The dksA C4-type; degenerate zinc-finger motif lies at 89–123 (CEKTGQEIPYERLEAVPYARMTVEAQADVEDDLET). Basic and acidic residues predominate over residues 127–146 (SYEREFHEQVKDLSNKETID).

This is General stress protein 16O (yocK) from Bacillus subtilis (strain 168).